A 484-amino-acid polypeptide reads, in one-letter code: tRNA-2-methylthio-N(6)-dimethylallyladenosine synthase (484 aa).

Residues Gly-36 to Glu-153 enclose the MTTase N-terminal domain. The [4Fe-4S] cluster site is built by Cys-45, Cys-82, Cys-116, Cys-190, Cys-194, and Cys-197. Residues Arg-176–Ser-415 form the Radical SAM core domain. The TRAM domain occupies Gln-416–Leu-479. The segment at Glu-428 to Phe-450 is disordered.

The protein belongs to the methylthiotransferase family. MiaB subfamily. In terms of assembly, monomer. [4Fe-4S] cluster serves as cofactor.

It is found in the cytoplasm. It carries out the reaction N(6)-dimethylallyladenosine(37) in tRNA + (sulfur carrier)-SH + AH2 + 2 S-adenosyl-L-methionine = 2-methylsulfanyl-N(6)-dimethylallyladenosine(37) in tRNA + (sulfur carrier)-H + 5'-deoxyadenosine + L-methionine + A + S-adenosyl-L-homocysteine + 2 H(+). Its function is as follows. Catalyzes the methylthiolation of N6-(dimethylallyl)adenosine (i(6)A), leading to the formation of 2-methylthio-N6-(dimethylallyl)adenosine (ms(2)i(6)A) at position 37 in tRNAs that read codons beginning with uridine. This is tRNA-2-methylthio-N(6)-dimethylallyladenosine synthase from Xanthomonas oryzae pv. oryzae (strain PXO99A).